We begin with the raw amino-acid sequence, 437 residues long: 3-ketoacyl-CoA thiolase (437 aa).

Residue C99 is the Acyl-thioester intermediate of the active site. Catalysis depends on proton acceptor residues H392 and C422.

This sequence belongs to the thiolase-like superfamily. Thiolase family. Heterotetramer of two alpha chains (FadJ) and two beta chains (FadI).

The protein resides in the cytoplasm. The enzyme catalyses an acyl-CoA + acetyl-CoA = a 3-oxoacyl-CoA + CoA. Its pathway is lipid metabolism; fatty acid beta-oxidation. Functionally, catalyzes the final step of fatty acid oxidation in which acetyl-CoA is released and the CoA ester of a fatty acid two carbons shorter is formed. This chain is 3-ketoacyl-CoA thiolase, found in Erwinia tasmaniensis (strain DSM 17950 / CFBP 7177 / CIP 109463 / NCPPB 4357 / Et1/99).